Here is a 120-residue protein sequence, read N- to C-terminus: Large ribosomal subunit protein uL18 (120 aa).

This sequence belongs to the universal ribosomal protein uL18 family. Part of the 50S ribosomal subunit; part of the 5S rRNA/L5/L18/L25 subcomplex. Contacts the 5S and 23S rRNAs.

Functionally, this is one of the proteins that bind and probably mediate the attachment of the 5S RNA into the large ribosomal subunit, where it forms part of the central protuberance. The chain is Large ribosomal subunit protein uL18 from Rhodopseudomonas palustris (strain BisA53).